The following is a 174-amino-acid chain: Gamma-crystallin F (174 aa).

2 consecutive Beta/gamma crystallin 'Greek key' domains span residues 2–40 and 41–83; these read GKIT…RVDS and GCWM…RLIP. The connecting peptide stretch occupies residues 84 to 87; sequence HTGS. Beta/gamma crystallin 'Greek key' domains lie at 88-128 and 129-171; these read HRLR…NVLE and GWWV…RRAV.

Belongs to the beta/gamma-crystallin family.

Functionally, crystallins are the dominant structural components of the vertebrate eye lens. This Bos taurus (Bovine) protein is Gamma-crystallin F (CRYGF).